Reading from the N-terminus, the 721-residue chain is Zinc-transporting ATPase (721 aa).

The Cytoplasmic portion of the chain corresponds to 1–107 (MTQSSPLKTQ…HSHGAGEFNL (107 aa)). Residues 8 to 74 (KTQQMQVGGM…RIAALGYTLA (67 aa)) form the HMA domain. Residues Cys19 and Cys22 each contribute to the Zn(2+) site. Positions 80-101 (VTLNGHKHPHSHREEGHSHSHG) are disordered. Residues 108–128 (KQELLPVLTAIALFTIAILFE) traverse the membrane as a helical segment. Residues 129-140 (QPLHNTPGQIAE) lie on the Extracellular side of the membrane. A helical membrane pass occupies residues 141–160 (FAVIIPAYLLSGWTVLKTAG). Residues 161–167 (RNILRGQ) are Cytoplasmic-facing. A helical transmembrane segment spans residues 168-187 (IFDENFLMTIATLGALAIHQ). The Extracellular segment spans residues 188–190 (LPE). The chain crosses the membrane as a helical span at residues 191 to 210 (AVAVMLFFRVGELFQEYSVG). Residues 211-344 (RSRRSIKALL…ITQFARYYTP (134 aa)) are Cytoplasmic-facing. The helical transmembrane segment at 345–363 (VIVFLSLAVALLPPLFIPG) threads the bilayer. Residues 364-369 (ADRADW) are Extracellular-facing. A helical transmembrane segment spans residues 370 to 387 (VYRALVLLVISCPCGLVI). Residues 388–671 (SIPLGYFGGI…AIHVARKTRQ (284 aa)) are Cytoplasmic-facing. Residue Asp425 is the 4-aspartylphosphate intermediate of the active site. Mg(2+) contacts are provided by Asp618 and Asp622. A helical membrane pass occupies residues 672 to 693 (IVVQNIVLALGIKALFIALGTI). Topologically, residues 694–701 (GLATLWEA) are extracellular. The chain crosses the membrane as a helical span at residues 702–717 (VFADVGVALLAILNAT). Topologically, residues 718 to 721 (RIAK) are cytoplasmic.

Belongs to the cation transport ATPase (P-type) (TC 3.A.3) family. Type IB subfamily.

The protein localises to the cell membrane. It catalyses the reaction Zn(2+)(in) + ATP + H2O = Zn(2+)(out) + ADP + phosphate + H(+). The sequence is that of Zinc-transporting ATPase (ziaA) from Synechocystis sp. (strain ATCC 27184 / PCC 6803 / Kazusa).